We begin with the raw amino-acid sequence, 343 residues long: Heat-inducible transcription repressor HrcA (343 aa).

The protein belongs to the HrcA family.

Negative regulator of class I heat shock genes (grpE-dnaK-dnaJ and groELS operons). Prevents heat-shock induction of these operons. The chain is Heat-inducible transcription repressor HrcA from Mycobacterium tuberculosis (strain ATCC 25177 / H37Ra).